Here is a 143-residue protein sequence, read N- to C-terminus: Deoxyuridine 5'-triphosphate nucleotidohydrolase (143 aa).

Residues S65, V78, R132, and G138 each contribute to the dUMP site.

Belongs to the dUTPase family. Homotrimer. Mg(2+) serves as cofactor.

It catalyses the reaction dUTP + H2O = dUMP + diphosphate + H(+). It functions in the pathway pyrimidine metabolism; dUMP biosynthesis; dUMP from dCTP (dUTP route): step 2/2. Functionally, involved in nucleotide metabolism via production of dUMP, the immediate precursor of thymidine nucleotides, and decreases the intracellular concentration of dUTP so that uracil cannot be incorporated into DNA. This is Deoxyuridine 5'-triphosphate nucleotidohydrolase (DUT1) from Antonospora locustae (Microsporidian parasite).